The sequence spans 768 residues: Gephyrin (768 aa).

Residues 14-166 form an MPT Mo-transferase region; the sequence is QIRVGVLTVS…LPGSKKGSQE (153 aa). The tract at residues 153–348 is interaction with GABARAP; it reads LIINLPGSKK…VDITKVARRH (196 aa). Disordered regions lie at residues 194-245 and 273-316; these read DELE…DSSS and TASL…ASRV. A compositionally biased stretch (pro residues) spans 200–212; that stretch reads PSPPPPLSPPPTT. 2 positions are modified to phosphoserine: S201 and S207. T211 bears the Phosphothreonine mark. S213 carries the post-translational modification Phosphoserine. The S-palmitoyl cysteine moiety is linked to residue C225. Polar residues predominate over residues 274-299; that stretch reads ASLSTTPSESPRAQATSRLSTASCPT. At S275 the chain carries Phosphoserine. T278 and T279 each carry phosphothreonine. Phosphoserine is present on residues S281 and S283. A lipid anchor (S-palmitoyl cysteine) is attached at C297. Positions 326 to 768 are MPT adenylyltransferase; sequence SSKENILRAS…VVDVMVIGRL (443 aa). S337 is subject to Phosphoserine.

The protein in the N-terminal section; belongs to the MoaB/Mog family. In the C-terminal section; belongs to the MoeA family. In terms of assembly, homotrimer, homodimer and homooligomer. Interacts with SRGAP2 (via SH3 domain). Interacts with GLRB. Interacts with GABARAP. Interacts with GABRA3. GABRA3 and GLRB occupy overlapping binding sites. Interacts with ARHGAP32; IQSEC3, INSYN1 and INSYN2A. It depends on Mg(2+) as a cofactor. In terms of processing, phosphorylated. Palmitoylated. Palmitoylation is stimulated by GABA type A receptors activity. Palmitoylation by ZDHHC12 regulates clustering at synapses. As to expression, expressed in tissues including spinal cord, brain, liver, kidney and lung.

It is found in the postsynaptic cell membrane. Its subcellular location is the cell membrane. It localises to the cytoplasm. The protein resides in the cytosol. The protein localises to the cytoskeleton. It is found in the cell projection. Its subcellular location is the dendrite. It localises to the postsynaptic density. It carries out the reaction molybdopterin + ATP + H(+) = adenylyl-molybdopterin + diphosphate. The catalysed reaction is adenylyl-molybdopterin + molybdate = Mo-molybdopterin + AMP + H(+). Its pathway is cofactor biosynthesis; molybdopterin biosynthesis. Inhibited by copper and tungsten. In terms of biological role, microtubule-associated protein involved in membrane protein-cytoskeleton interactions. It is thought to anchor the inhibitory glycine receptor (GLYR) to subsynaptic microtubules. Acts as a major instructive molecule at inhibitory synapses, where it also clusters GABA type A receptors. Also has a catalytic activity and catalyzes two steps in the biosynthesis of the molybdenum cofactor. In the first step, molybdopterin is adenylated. Subsequently, molybdate is inserted into adenylated molybdopterin and AMP is released. The polypeptide is Gephyrin (Gphn) (Rattus norvegicus (Rat)).